The primary structure comprises 215 residues: Myelin protein zero-like protein 2 (215 aa).

Residues 1-26 form the signal peptide; sequence MYGKSSTRAVLLLLGIQLTALWPIAA. Residues 27 to 141 form the Ig-like V-type domain; sequence VEIYTSRVLE…DGVIGEIRLS (115 aa). At 27–154 the chain is on the extracellular side; sequence VEIYTSRVLE…TVRFSEIHFL (128 aa). 2 N-linked (GlcNAc...) asparagine glycosylation sites follow: Asn39 and Asn118. Cys47 and Cys123 form a disulfide bridge. A helical transmembrane segment spans residues 155–175; the sequence is ALAIGSACALMIIIVIVVVLF. Residues 176–215 lie on the Cytoplasmic side of the membrane; it reads QHYRKKRWAERAHKVVEIKSKEEERLNQEKKVSVYLEDTD.

The protein belongs to the myelin P0 protein family. As to expression, widely expressed. In fetal tissues, highest expression in the inner ear. In adult tissues, highest levels in thymus and lung.

It is found in the membrane. Its function is as follows. Mediates homophilic cell-cell adhesion. In Homo sapiens (Human), this protein is Myelin protein zero-like protein 2 (MPZL2).